We begin with the raw amino-acid sequence, 147 residues long: Diaminohydroxyphosphoribosylamino-pyrimidine deaminase (147 aa).

A CMP/dCMP-type deaminase domain is found at 1-122 (MKDRFYMTRA…LYLRKKGISV (122 aa)). Residue His-50 participates in Zn(2+) binding. Catalysis depends on Glu-52, which acts as the Proton donor. 2 residues coordinate Zn(2+): Cys-75 and Cys-84.

This sequence belongs to the cytidine and deoxycytidylate deaminase family. The cofactor is Zn(2+).

The catalysed reaction is 2,5-diamino-6-hydroxy-4-(5-phosphoribosylamino)-pyrimidine + H2O + H(+) = 5-amino-6-(5-phospho-D-ribosylamino)uracil + NH4(+). The protein operates within cofactor biosynthesis; riboflavin biosynthesis; 5-amino-6-(D-ribitylamino)uracil from GTP: step 2/4. The chain is Diaminohydroxyphosphoribosylamino-pyrimidine deaminase (ribD1) from Buchnera aphidicola subsp. Schizaphis graminum (strain Sg).